We begin with the raw amino-acid sequence, 113 residues long: Venom protein 184 (113 aa).

An N-terminal signal peptide occupies residues 1–21; it reads MKTTLIFCILGIVIPTAVVSS.

In terms of processing, contains 3 disulfide bonds. Expressed by the venom gland.

It is found in the secreted. The sequence is that of Venom protein 184 from Lychas mucronatus (Chinese swimming scorpion).